Reading from the N-terminus, the 289-residue chain is Cuticle collagen 19 (289 aa).

The signal sequence occupies residues 1–18 (MGKLIVVGSCGVLVCVLA). Residues 95–289 (SEGCPAGPPG…PCPSRAAYKA (195 aa)) are disordered. Triple-helical region regions lie at residues 101–130 (GPPG…PGVI) and 147–269 (GRPG…KGED). Over residues 162-183 (GPAGGNGRRGPPGPVGGPGEQG) the composition is skewed to gly residues. 2 stretches are compositionally biased toward low complexity: residues 184–207 (PQGD…GEPG) and 223–239 (PRGE…PGND).

Belongs to the cuticular collagen family. Collagen polypeptide chains are complexed within the cuticle by disulfide bonds and other types of covalent cross-links.

Functionally, nematode cuticles are composed largely of collagen-like proteins. The cuticle functions both as an exoskeleton and as a barrier to protect the worm from its environment. This chain is Cuticle collagen 19 (col-19), found in Caenorhabditis elegans.